A 133-amino-acid chain; its full sequence is ATP synthase epsilon chain, chloroplastic (133 aa).

It belongs to the ATPase epsilon chain family. As to quaternary structure, F-type ATPases have 2 components, CF(1) - the catalytic core - and CF(0) - the membrane proton channel. CF(1) has five subunits: alpha(3), beta(3), gamma(1), delta(1), epsilon(1). CF(0) has three main subunits: a, b and c.

The protein resides in the plastid. The protein localises to the chloroplast thylakoid membrane. Produces ATP from ADP in the presence of a proton gradient across the membrane. This chain is ATP synthase epsilon chain, chloroplastic, found in Nicotiana sylvestris (Wood tobacco).